The sequence spans 491 residues: Serine/threonine-protein kinase 3 (491 aa).

M1 carries the post-translational modification N-acetylmethionine. S15 carries the phosphoserine modification. A Protein kinase domain is found at 27–278 (FDVLEKLGEG…ATQLLQHPFI (252 aa)). Residues 33 to 41 (LGEGSYGSV) and K56 each bind ATP. The residue at position 117 (T117) is a Phosphothreonine; by PKB/AKT1. The active-site Proton acceptor is D146. Mg(2+)-binding residues include N151 and D164. Residue T180 is modified to Phosphothreonine; by autocatalysis. Positions 291–324 (ITEGMEIKAKRHEEQQRELEDEEENSDEDELDSH) form a coiled coil. Disordered regions lie at residues 301–343 (RHEE…TSTM) and 370–392 (EDEE…QRPS). Acidic residues predominate over residues 309–321 (LEDEEENSDEDEL). A Phosphoserine modification is found at S316. The span at 326-343 (MVKTSSEGVGTMRATSTM) shows a compositional bias: polar residues. Phosphothreonine is present on residues T336 and T378. The span at 381–390 (RNATSPQVQR) shows a compositional bias: polar residues. Residue T384 is modified to Phosphothreonine; by PKB/AKT1. Phosphoserine occurs at positions 385 and 444. The region spanning 437-484 (FDFLKNLSLEELQMRLKALDPMMEREIEELHQRYSAKRQPILDAMDAK) is the SARAH domain.

The protein belongs to the protein kinase superfamily. STE Ser/Thr protein kinase family. STE20 subfamily. As to quaternary structure, homodimer; mediated via the coiled-coil region. Interacts with NORE1, which inhibits autoactivation. Interacts with and stabilizes SAV1. Interacts with RAF1, which prevents dimerization and phosphorylation. Interacts with RASSF1. Interacts (via SARAH domain) with isoform 1 of NEK2. Interacts with ESR1 only in the presence of SAV1. Interacts with PKB/AKT1. Forms a tripartite complex with MOBKL1B and STK38. Interacts with RASSF2 (via SARAH domain). Interacts with DLG5 (via PDZ domain 3). Interacts with LATS1; this interaction is inhibited in the presence of DLG5. Interacts with MARK3 in the presence of DLG5. Interacts with RASSF5; this interaction inhibits STK3 autoactivation through heterodimerization. Interacts (when phosphorylated) with SLMAP (via FHA domain); the interaction associates STK3 with the STRIPAK complex. Mg(2+) serves as cofactor. In terms of processing, autophosphorylated on two residues Thr-174 and Thr-180, leading to activation. Phosphorylation at Thr-117 and Thr-384 by PKB/AKT1, leads to inhibition of its: cleavage, kinase activity, autophosphorylation at Thr-180, binding to RASSF1 and nuclear translocation, and increase in its binding to RAF1. Phosphorylated at Ser-15 by PLK1, leading to activation. Post-translationally, proteolytically cleaved by caspase-3 during apoptosis. Proteolytic cleavage results in kinase activation and nuclear translocation of the truncated form (MST1/N). Ubiquitinated by TRIM69; leading to its redistribution to the perinuclear cytoskeleton.

The protein resides in the cytoplasm. The protein localises to the nucleus. The catalysed reaction is L-seryl-[protein] + ATP = O-phospho-L-seryl-[protein] + ADP + H(+). It catalyses the reaction L-threonyl-[protein] + ATP = O-phospho-L-threonyl-[protein] + ADP + H(+). Its activity is regulated as follows. Inhibited by the C-terminal non-catalytic region. Activated by caspase-cleavage. Full activation also requires homodimerization and autophosphorylation of Thr-180, which are inhibited by the proto-oncogene product RAF1. Activated by RASSF1 which acts by preventing its dephosphorylation. When autophosphorylated at Thr-180, recruits STRIPAK complex and promotes PP2A-mediated dephosphorylation and inactivation of STK3. Its function is as follows. Stress-activated, pro-apoptotic kinase which, following caspase-cleavage, enters the nucleus and induces chromatin condensation followed by internucleosomal DNA fragmentation. Key component of the Hippo signaling pathway which plays a pivotal role in organ size control and tumor suppression by restricting proliferation and promoting apoptosis. The core of this pathway is composed of a kinase cascade wherein STK3/MST2 and STK4/MST1, in complex with its regulatory protein SAV1, phosphorylates and activates LATS1/2 in complex with its regulatory protein MOB1, which in turn phosphorylates and inactivates YAP1 oncoprotein and WWTR1/TAZ. Phosphorylation of YAP1 by LATS2 inhibits its translocation into the nucleus to regulate cellular genes important for cell proliferation, cell death, and cell migration. STK3/MST2 and STK4/MST1 are required to repress proliferation of mature hepatocytes, to prevent activation of facultative adult liver stem cells (oval cells), and to inhibit tumor formation. Phosphorylates NKX2-1. Phosphorylates NEK2 and plays a role in centrosome disjunction by regulating the localization of NEK2 to centrosomes, and its ability to phosphorylate CROCC and CEP250. In conjunction with SAV1, activates the transcriptional activity of ESR1 through the modulation of its phosphorylation. Positively regulates RAF1 activation via suppression of the inhibitory phosphorylation of RAF1 on 'Ser-259'. Phosphorylates MOBKL1A and RASSF2. Phosphorylates MOBKL1B on 'Thr-74'. Acts cooperatively with MOBKL1B to activate STK38. In Rattus norvegicus (Rat), this protein is Serine/threonine-protein kinase 3 (Stk3).